A 354-amino-acid chain; its full sequence is F-box/kelch-repeat protein At1g80440 (354 aa).

Positions 2–49 (ELIPNLPDDVARECLLRSSYQQFPVIASVCRAWNREVSLSQFLHQRKA) constitute an F-box domain. 4 Kelch repeats span residues 63 to 110 (RVDP…CRLV), 115 to 163 (DLIV…ASDS), 166 to 213 (TVLV…FHAG), and 215 to 263 (FHVI…PPTC).

In Arabidopsis thaliana (Mouse-ear cress), this protein is F-box/kelch-repeat protein At1g80440.